A 454-amino-acid chain; its full sequence is GTPase Obg (454 aa).

The Obg domain maps to 2–159 (SDFVDEAVLH…VDIRLELKTI (158 aa)). Positions 60-87 (YQRRPHRKAENGAPGQGSNRSGASGADL) are disordered. The OBG-type G domain occupies 160–335 (ADVGLVGFPS…LAYALGEQVA (176 aa)). GTP is bound by residues 166–173 (GFPSAGKS), 191–195 (FTTLV), 212–215 (DVPG), 287–290 (NKID), and 316–318 (SAA). Ser173 and Thr193 together coordinate Mg(2+). Residues 353 to 435 (PREIGEIPFQ…DNPVVFDWDP (83 aa)) form the OCT domain.

Belongs to the TRAFAC class OBG-HflX-like GTPase superfamily. OBG GTPase family. As to quaternary structure, monomer. It depends on Mg(2+) as a cofactor.

Its subcellular location is the cytoplasm. In terms of biological role, an essential GTPase which binds GTP, GDP and possibly (p)ppGpp with moderate affinity, with high nucleotide exchange rates and a fairly low GTP hydrolysis rate. Plays a role in control of the cell cycle, stress response, ribosome biogenesis and in those bacteria that undergo differentiation, in morphogenesis control. The polypeptide is GTPase Obg (Thermobifida fusca (strain YX)).